Here is a 290-residue protein sequence, read N- to C-terminus: Ribonuclease HIII (290 aa).

The RNase H type-2 domain occupies 78–290 (LPLIGTDEVG…FKNTEKAKNA (213 aa)). Residues Asp-84, Glu-85, and Asp-187 each coordinate a divalent metal cation.

This sequence belongs to the RNase HII family. RnhC subfamily. Mn(2+) serves as cofactor. Requires Mg(2+) as cofactor.

The protein resides in the cytoplasm. The enzyme catalyses Endonucleolytic cleavage to 5'-phosphomonoester.. Functionally, endonuclease that specifically degrades the RNA of RNA-DNA hybrids. The sequence is that of Ribonuclease HIII from Streptococcus pneumoniae (strain P1031).